Reading from the N-terminus, the 591-residue chain is Maintenance of mitochondrial morphology protein 1 (591 aa).

Topologically, residues 1-83 are lumenal; sequence MGFNIPWNGT…AQPSLSFTQG (83 aa). The chain crosses the membrane as a helical span at residues 84 to 104; sequence LLVGQLSVVLLIGAFIKFFIF. Residues 105–591 lie on the Cytoplasmic side of the membrane; it reads GEAPPPPSRS…GSMPDSVAVT (487 aa). 4 disordered regions span residues 138-159, 170-189, 334-398, and 479-591; these read PRTLREKPSTSNILRPVPSSST, YSATPTNPTSKHGRSRVHHS, PGTS…KHAH, and EAEA…VAVT. Polar residues-rich tracts occupy residues 146 to 159 and 170 to 179; these read STSNILRPVPSSST and YSATPTNPTS. Positions 180-189 are enriched in basic residues; it reads KHGRSRVHHS. An SMP-LTD domain is found at 192–462; sequence QPESLDWFNV…EPRVQVVGLP (271 aa). The segment covering 336–371 has biased composition (polar residues); sequence TSDQTMGPSASPPNQSTSTETASINDQTSEGQSTQR. Residues 379-389 show a composition bias toward low complexity; the sequence is PTNSTPTAATA. Gly residues-rich tracts occupy residues 496-525 and 536-550; these read TAGGDGMRGRGGGGGGGGLRGNSSGRGMGY and GDGGTGVVQGQGAGG. Residues 563-578 are compositionally biased toward basic and acidic residues; that stretch reads GGDDGEGPGRRSDERF.

This sequence belongs to the MMM1 family. Homodimer. Component of the ER-mitochondria encounter structure (ERMES) or MDM complex, composed of MMM1, MDM10, MDM12 and MDM34. An MMM1 homodimer associates with one molecule of MDM12 on each side in a pairwise head-to-tail manner, and the SMP-LTD domains of MMM1 and MDM12 generate a continuous hydrophobic tunnel for phospholipid trafficking.

The protein localises to the endoplasmic reticulum membrane. In terms of biological role, component of the ERMES/MDM complex, which serves as a molecular tether to connect the endoplasmic reticulum (ER) and mitochondria. Components of this complex are involved in the control of mitochondrial shape and protein biogenesis, and function in nonvesicular lipid trafficking between the ER and mitochondria. The MDM12-MMM1 subcomplex functions in the major beta-barrel assembly pathway that is responsible for biogenesis of all outer membrane beta-barrel proteins, and acts in a late step after the SAM complex. The MDM10-MDM12-MMM1 subcomplex further acts in the TOM40-specific pathway after the action of the MDM12-MMM1 complex. Essential for establishing and maintaining the structure of mitochondria and maintenance of mtDNA nucleoids. The chain is Maintenance of mitochondrial morphology protein 1 from Ajellomyces capsulatus (strain G186AR / H82 / ATCC MYA-2454 / RMSCC 2432) (Darling's disease fungus).